A 476-amino-acid chain; its full sequence is Calcium/calmodulin-dependent protein kinase type 1G (476 aa).

In terms of domain architecture, Protein kinase spans 23 to 277 (FIFMEVLGSG…CEKALRHPWI (255 aa)). ATP is bound by residues 29 to 37 (LGSGAFSEV) and Lys-52. Asp-143 functions as the Proton acceptor in the catalytic mechanism. The autoinhibitory domain stretch occupies residues 277-317 (IDGNTALHRDIYPSVSLQIQKNFAKSKWRQAFNAAAVVHHM). Residues 297–318 (KNFAKSKWRQAFNAAAVVHHMR) are calmodulin-binding. The disordered stretch occupies residues 326-387 (SPSVRQEVEN…SSRPSAPGGR (62 aa)).

It belongs to the protein kinase superfamily. CAMK Ser/Thr protein kinase family. CaMK subfamily. In terms of processing, prenylated on Cys-473.

The protein localises to the cytoplasm. It is found in the golgi apparatus membrane. The protein resides in the cell membrane. It carries out the reaction L-seryl-[protein] + ATP = O-phospho-L-seryl-[protein] + ADP + H(+). The catalysed reaction is L-threonyl-[protein] + ATP = O-phospho-L-threonyl-[protein] + ADP + H(+). Activated by Ca(2+)/calmodulin. Binding of calmodulin is thought to result in a conformational change and leads to activation through phosphorylation by CAMKK1. In terms of biological role, calcium/calmodulin-dependent protein kinase belonging to a proposed calcium-triggered signaling cascade. In vitro phosphorylates transcription factor CREB1. This chain is Calcium/calmodulin-dependent protein kinase type 1G (Camk1g), found in Rattus norvegicus (Rat).